A 268-amino-acid chain; its full sequence is Tryptophan synthase alpha chain (268 aa).

Catalysis depends on proton acceptor residues E49 and D60.

Belongs to the TrpA family. As to quaternary structure, tetramer of two alpha and two beta chains.

It carries out the reaction (1S,2R)-1-C-(indol-3-yl)glycerol 3-phosphate + L-serine = D-glyceraldehyde 3-phosphate + L-tryptophan + H2O. The protein operates within amino-acid biosynthesis; L-tryptophan biosynthesis; L-tryptophan from chorismate: step 5/5. In terms of biological role, the alpha subunit is responsible for the aldol cleavage of indoleglycerol phosphate to indole and glyceraldehyde 3-phosphate. This Yersinia enterocolitica serotype O:8 / biotype 1B (strain NCTC 13174 / 8081) protein is Tryptophan synthase alpha chain.